A 510-amino-acid chain; its full sequence is ATP synthase subunit alpha (510 aa).

ATP is bound at residue 170 to 177 (GDRQTGKT).

The protein belongs to the ATPase alpha/beta chains family. As to quaternary structure, F-type ATPases have 2 components, CF(1) - the catalytic core - and CF(0) - the membrane proton channel. CF(1) has five subunits: alpha(3), beta(3), gamma(1), delta(1), epsilon(1). CF(0) has three main subunits: a(1), b(2) and c(9-12). The alpha and beta chains form an alternating ring which encloses part of the gamma chain. CF(1) is attached to CF(0) by a central stalk formed by the gamma and epsilon chains, while a peripheral stalk is formed by the delta and b chains.

The protein resides in the cell inner membrane. The catalysed reaction is ATP + H2O + 4 H(+)(in) = ADP + phosphate + 5 H(+)(out). In terms of biological role, produces ATP from ADP in the presence of a proton gradient across the membrane. The alpha chain is a regulatory subunit. The chain is ATP synthase subunit alpha from Acidiphilium cryptum (strain JF-5).